The sequence spans 295 residues: MQASNSFSSPDSLSTYLSEINQYPLLTQPQEQELSKRFRAGDLAAGHQLVTANLRFVVKVAYEYRSYGLKMSDLIQEANIGLMKAVQKFDPDKGIRLISYAVWWIRAYIQNCILKNWSLVKLGTTQAQRRLFFSLARTRRELEKMGAGDANVVNAEEIARKLNVKASEVREMEQRMGGRDLSLDAPMGEDGDATHLDFVESESVSAVDEVADRQQANLTRELVQRALRRLDPRERFIIEQRVMGDAEMTLSELGEHFGFSRERARQLEIRAKDKLKLALVTLMAEAGVDESTLNA.

Residues 73–86 (DLIQEANIGLMKAV) carry the Polymerase core binding motif. A DNA-binding region (H-T-H motif) is located at residues 250 to 269 (LSELGEHFGFSRERARQLEI).

The protein belongs to the sigma-70 factor family.

Sigma factors are initiation factors that promote the attachment of RNA polymerase to specific initiation sites and are then released. This sigma factor is essential for normal fruiting body formation. This chain is RNA polymerase sigma-C factor (sigC), found in Myxococcus xanthus.